Reading from the N-terminus, the 368-residue chain is Anhydro-N-acetylmuramic acid kinase (368 aa).

Position 11–18 (11–18 (GTSLDGID)) interacts with ATP.

The protein belongs to the anhydro-N-acetylmuramic acid kinase family.

The catalysed reaction is 1,6-anhydro-N-acetyl-beta-muramate + ATP + H2O = N-acetyl-D-muramate 6-phosphate + ADP + H(+). Its pathway is amino-sugar metabolism; 1,6-anhydro-N-acetylmuramate degradation. It functions in the pathway cell wall biogenesis; peptidoglycan recycling. In terms of biological role, catalyzes the specific phosphorylation of 1,6-anhydro-N-acetylmuramic acid (anhMurNAc) with the simultaneous cleavage of the 1,6-anhydro ring, generating MurNAc-6-P. Is required for the utilization of anhMurNAc either imported from the medium or derived from its own cell wall murein, and thus plays a role in cell wall recycling. In Sulfurimonas denitrificans (strain ATCC 33889 / DSM 1251) (Thiomicrospira denitrificans (strain ATCC 33889 / DSM 1251)), this protein is Anhydro-N-acetylmuramic acid kinase.